Consider the following 392-residue polypeptide: Casein kinase II subunit alpha (392 aa).

In terms of domain architecture, Protein kinase spans 39–324; sequence YQLVRKLGRG…AREAMDHPYF (286 aa). ATP is bound by residues 45–53 and Lys68; that span reads LGRGKYSEV. Asp156 functions as the Proton acceptor in the catalytic mechanism. The tract at residues 334–355 is disordered; sequence MGGSNMPSGSSTPVSSASMMSG. The segment covering 337–354 has biased composition (low complexity); the sequence is SNMPSGSSTPVSSASMMS.

It belongs to the protein kinase superfamily. Ser/Thr protein kinase family. CK2 subfamily. As to quaternary structure, tetramer composed of an alpha chain, an alpha' and two beta chains.

The protein resides in the nucleus. The catalysed reaction is L-seryl-[protein] + ATP = O-phospho-L-seryl-[protein] + ADP + H(+). The enzyme catalyses L-threonyl-[protein] + ATP = O-phospho-L-threonyl-[protein] + ADP + H(+). Catalytic subunit of a constitutively active serine/threonine-protein kinase complex that phosphorylates a large number of substrates containing acidic residues C-terminal to the phosphorylated serine or threonine. Regulates numerous cellular processes, such as cell cycle progression, apoptosis and transcription, as well as viral infection. May act as a regulatory node which integrates and coordinates numerous signals leading to an appropriate cellular response. During mitosis, functions as a component of the p53/TP53-dependent spindle assembly checkpoint (SAC) that maintains cyclin-B-CDK1 activity and G2 arrest in response to spindle damage. Can also negatively regulate apoptosis. Phosphorylates the caspases CASP9 and CASP2 and the apoptotic regulator NOL3. Phosphorylation protects CASP9 from cleavage and activation by CASP8, and inhibits the dimerization of CASP2 and activation of CASP8. Plays an important role in the circadian clock function by phosphorylating BMAL1. In Xenopus laevis (African clawed frog), this protein is Casein kinase II subunit alpha (csnk2a1).